A 422-amino-acid polypeptide reads, in one-letter code: Zinc finger protein 550 (422 aa).

In terms of domain architecture, KRAB spans 12 to 83 (VTFKDVAVTF…KRGLSHATCA (72 aa)). The segment at 113 to 158 (LESSTSSDSRLGRARDEEGLLEMQKGKVTPETDLHKETHLGKVSLE) is disordered. Residues 122 to 152 (RLGRARDEEGLLEMQKGKVTPETDLHKETHL) show a composition bias toward basic and acidic residues. 8 consecutive C2H2-type zinc fingers follow at residues 203 to 225 (YKCKQCGKGFNRKWYLVRHQRVH), 231 to 253 (YECNACGKAFSQSSTLIRHYLIH), 259 to 281 (YKCLECGKAFKRRSYLMQHHPIH), 287 to 309 (YECSQCRKAFTHRSTFIRHNRTH), 315 to 337 (FECKECEKAFSNRAHLIQHYIIH), 343 to 365 (YDCMACGKAFRCSSELIQHQRIH), 371 to 393 (YECTQCGKAFHRSTYLIQHSVIH), and 399 to 421 (YKCIECGKAFKRRSHLLQHQRVH).

The protein belongs to the krueppel C2H2-type zinc-finger protein family.

The protein localises to the nucleus. Functionally, may be involved in transcriptional regulation. The chain is Zinc finger protein 550 (ZNF550) from Homo sapiens (Human).